The following is a 320-amino-acid chain: 1-aminocyclopropane-1-carboxylate oxidase (320 aa).

Residues 156–256 (PTFGTKVSNY…RMSIASFYNP (101 aa)) form the Fe2OG dioxygenase domain. Fe cation-binding residues include His180, Asp182, and His237.

The protein belongs to the iron/ascorbate-dependent oxidoreductase family. Fe cation is required as a cofactor.

The catalysed reaction is 1-aminocyclopropane-1-carboxylate + L-ascorbate + O2 = ethene + L-dehydroascorbate + hydrogen cyanide + CO2 + 2 H2O. It participates in alkene biosynthesis; ethylene biosynthesis via S-adenosyl-L-methionine; ethylene from S-adenosyl-L-methionine: step 2/2. In Brassica juncea (Indian mustard), this protein is 1-aminocyclopropane-1-carboxylate oxidase (ACO).